Reading from the N-terminus, the 414-residue chain is Gamma-glutamyl phosphate reductase (414 aa).

It belongs to the gamma-glutamyl phosphate reductase family.

The protein resides in the cytoplasm. It carries out the reaction L-glutamate 5-semialdehyde + phosphate + NADP(+) = L-glutamyl 5-phosphate + NADPH + H(+). The protein operates within amino-acid biosynthesis; L-proline biosynthesis; L-glutamate 5-semialdehyde from L-glutamate: step 2/2. Its function is as follows. Catalyzes the NADPH-dependent reduction of L-glutamate 5-phosphate into L-glutamate 5-semialdehyde and phosphate. The product spontaneously undergoes cyclization to form 1-pyrroline-5-carboxylate. The chain is Gamma-glutamyl phosphate reductase from Bacillus anthracis (strain A0248).